A 197-amino-acid polypeptide reads, in one-letter code: MRTATIKRKTKETDIEVTVNLDGAGVSNAATGIGFFDHMLDLLAKHSRIDITVKAVGDLHVDFHHTTEDVGIALGQAVKQALGNMAGINRYASMLMPMDETLTRVVIDVSGRPFLVFKADFPRDKIGEFDTELVREWFQAFAMNAGVTLHVETLYGENSHHIAESCFKGLARALRAAVAIDPQAAGEVPSTKGQLGG.

Belongs to the imidazoleglycerol-phosphate dehydratase family.

It is found in the cytoplasm. It carries out the reaction D-erythro-1-(imidazol-4-yl)glycerol 3-phosphate = 3-(imidazol-4-yl)-2-oxopropyl phosphate + H2O. It participates in amino-acid biosynthesis; L-histidine biosynthesis; L-histidine from 5-phospho-alpha-D-ribose 1-diphosphate: step 6/9. This Rhodopseudomonas palustris (strain BisB5) protein is Imidazoleglycerol-phosphate dehydratase.